The following is a 64-amino-acid chain: DNA-directed RNA polymerase subunit Rpo10 (64 aa).

Cys-7, Cys-10, Cys-45, and Cys-46 together coordinate Zn(2+).

This sequence belongs to the archaeal Rpo10/eukaryotic RPB10 RNA polymerase subunit family. Part of the RNA polymerase complex. Zn(2+) serves as cofactor.

The protein localises to the cytoplasm. It carries out the reaction RNA(n) + a ribonucleoside 5'-triphosphate = RNA(n+1) + diphosphate. Its function is as follows. DNA-dependent RNA polymerase (RNAP) catalyzes the transcription of DNA into RNA using the four ribonucleoside triphosphates as substrates. The polypeptide is DNA-directed RNA polymerase subunit Rpo10 (Natronomonas pharaonis (strain ATCC 35678 / DSM 2160 / CIP 103997 / JCM 8858 / NBRC 14720 / NCIMB 2260 / Gabara) (Halobacterium pharaonis)).